The chain runs to 191 residues: Potassium-transporting ATPase KdpC subunit (191 aa).

Residues 8 to 28 form a helical membrane-spanning segment; the sequence is LFLFLLLLLVTGLAYPLLTTV.

This sequence belongs to the KdpC family. In terms of assembly, the system is composed of three essential subunits: KdpA, KdpB and KdpC.

It is found in the cell inner membrane. In terms of biological role, part of the high-affinity ATP-driven potassium transport (or Kdp) system, which catalyzes the hydrolysis of ATP coupled with the electrogenic transport of potassium into the cytoplasm. This subunit acts as a catalytic chaperone that increases the ATP-binding affinity of the ATP-hydrolyzing subunit KdpB by the formation of a transient KdpB/KdpC/ATP ternary complex. The chain is Potassium-transporting ATPase KdpC subunit from Pectobacterium atrosepticum (strain SCRI 1043 / ATCC BAA-672) (Erwinia carotovora subsp. atroseptica).